A 326-amino-acid polypeptide reads, in one-letter code: Fructokinase (326 aa).

The interval glutamate 275–proline 326 is disordered. Basic residues predominate over residues glutamine 287–glutamine 299. Residues tryptophan 307–proline 326 show a composition bias toward basic and acidic residues.

The protein belongs to the carbohydrate kinase PfkB family.

It carries out the reaction D-fructose + ATP = D-fructose 6-phosphate + ADP + H(+). The protein is Fructokinase (frk) of Rhizobium leguminosarum bv. trifolii.